The chain runs to 98 residues: Protein FAM24A (98 aa).

Positions 1–29 (MFDLRTKVMIGIASTLLIAAIVLITVVFC) are cleaved as a signal peptide.

The protein belongs to the FAM24 family.

The protein localises to the secreted. This chain is Protein FAM24A (Fam24a), found in Rattus norvegicus (Rat).